The following is a 245-amino-acid chain: tRNA1(Val) (adenine(37)-N6)-methyltransferase (245 aa).

Belongs to the methyltransferase superfamily. tRNA (adenine-N(6)-)-methyltransferase family.

Its subcellular location is the cytoplasm. It catalyses the reaction adenosine(37) in tRNA1(Val) + S-adenosyl-L-methionine = N(6)-methyladenosine(37) in tRNA1(Val) + S-adenosyl-L-homocysteine + H(+). Functionally, specifically methylates the adenine in position 37 of tRNA(1)(Val) (anticodon cmo5UAC). The polypeptide is tRNA1(Val) (adenine(37)-N6)-methyltransferase (Klebsiella pneumoniae subsp. pneumoniae (strain ATCC 700721 / MGH 78578)).